A 320-amino-acid polypeptide reads, in one-letter code: Cytochrome f (320 aa).

An N-terminal signal peptide occupies residues 1 to 35 (MQTRKTFSWIKEQINRSISVSLMIYIITRPSISIA). 4 residues coordinate heme: Tyr36, Cys56, Cys59, and His60. Residues 286-306 (VQGLLFFLASVILAQIFLVLK) traverse the membrane as a helical segment.

This sequence belongs to the cytochrome f family. As to quaternary structure, the 4 large subunits of the cytochrome b6-f complex are cytochrome b6, subunit IV (17 kDa polypeptide, petD), cytochrome f and the Rieske protein, while the 4 small subunits are PetG, PetL, PetM and PetN. The complex functions as a dimer. It depends on heme as a cofactor.

The protein resides in the plastid. The protein localises to the chloroplast thylakoid membrane. Its function is as follows. Component of the cytochrome b6-f complex, which mediates electron transfer between photosystem II (PSII) and photosystem I (PSI), cyclic electron flow around PSI, and state transitions. The sequence is that of Cytochrome f from Daucus carota (Wild carrot).